Consider the following 364-residue polypeptide: MRKPDKDADRLTTLDLARSGEVRDISAMELVGEMKTGWNLGNSLDATGAPGNASEVNWGNPKTTKEMIDAVYNKGFDVIRIPVTWGGHVGDAPDYKIDDEWIARVQEVVNYAYDDGAYVIINSHHEEDWRIPDNEHIDAVDEKTAAIWKQVAERFKDYGDHLIFEGLNEPRVKGSPQEWNGGTEEGRRCVDRLNKTFLDTVRATGGNNEKRLLLMTTYASSSMSNVIKDTAIPEDDHIGFSIHAYTPYAFTYNANADWELFHWDDSHDGELVSLMTNLKENYLDKDIPVIITEYGAVNKDNNDEDRAKWVSSYIEYAELLGGIPCVWWDNGYYSSGNELFGIFDRNTCTWFTDTVTDAIIENAK.

Glu-169 serves as the catalytic Proton donor. The active-site Nucleophile is the Glu-293.

The protein belongs to the glycosyl hydrolase 5 (cellulase A) family.

It is found in the cytoplasm. It catalyses the reaction Endohydrolysis of (1-&gt;4)-beta-D-glucosidic linkages in cellulose, lichenin and cereal beta-D-glucans.. The enzyme catalyses Endohydrolysis of (1-&gt;4)-beta-D-xylosidic linkages in xylans.. Hydrolyzes both carboxymethylcellulose and xylan. Probably has a role in hydrolyzing oligosaccharides derived from cellulose, which are transported across the cell wall. In Ruminococcus albus, this protein is Endoglucanase A (celA).